The following is a 343-amino-acid chain: NADH-quinone oxidoreductase subunit H (343 aa).

The next 8 helical transmembrane spans lie at 19–39 (VAWTLVKIMALVVPLMLGVAY), 89–109 (ALFILGPILAIAPALAAWAVI), 124–144 (LLYVMAITSMGVYGVIIAGWA), 158–178 (AAQIVSYEIAMGFALVGVLMA), 198–218 (WYLWPLFPLFVVYLVAGVAET), 257–277 (ILVAALTTLMFLGGWLSPVAF), 279–299 (PDGIVWWLLKTGFVLFLFLWF), and 314–334 (LGWKVFIPITIVWIVFVGGMM).

Belongs to the complex I subunit 1 family. As to quaternary structure, NDH-1 is composed of 14 different subunits. Subunits NuoA, H, J, K, L, M, N constitute the membrane sector of the complex.

It localises to the cell inner membrane. It carries out the reaction a quinone + NADH + 5 H(+)(in) = a quinol + NAD(+) + 4 H(+)(out). NDH-1 shuttles electrons from NADH, via FMN and iron-sulfur (Fe-S) centers, to quinones in the respiratory chain. The immediate electron acceptor for the enzyme in this species is believed to be ubiquinone. Couples the redox reaction to proton translocation (for every two electrons transferred, four hydrogen ions are translocated across the cytoplasmic membrane), and thus conserves the redox energy in a proton gradient. This subunit may bind ubiquinone. The chain is NADH-quinone oxidoreductase subunit H from Thiobacillus denitrificans (strain ATCC 25259 / T1).